Reading from the N-terminus, the 56-residue chain is Large ribosomal subunit protein bL33 (56 aa).

Belongs to the bacterial ribosomal protein bL33 family.

The sequence is that of Large ribosomal subunit protein bL33 from Vibrio campbellii (strain ATCC BAA-1116).